A 121-amino-acid chain; its full sequence is Large ribosomal subunit protein bL12 (121 aa).

Belongs to the bacterial ribosomal protein bL12 family. In terms of assembly, homodimer. Part of the ribosomal stalk of the 50S ribosomal subunit. Forms a multimeric L10(L12)X complex, where L10 forms an elongated spine to which 2 to 4 L12 dimers bind in a sequential fashion. Binds GTP-bound translation factors.

Its function is as follows. Forms part of the ribosomal stalk which helps the ribosome interact with GTP-bound translation factors. Is thus essential for accurate translation. The protein is Large ribosomal subunit protein bL12 of Limosilactobacillus reuteri (strain DSM 20016) (Lactobacillus reuteri).